The following is a 338-amino-acid chain: Methionine import ATP-binding protein MetN 2 (338 aa).

Positions 2 to 242 (IEIEKVCVDF…PQHAFTQQLV (241 aa)) constitute an ABC transporter domain. Residue 39–46 (GTSGAGKS) coordinates ATP.

This sequence belongs to the ABC transporter superfamily. Methionine importer (TC 3.A.1.24) family. As to quaternary structure, the complex is composed of two ATP-binding proteins (MetN), two transmembrane proteins (MetI) and a solute-binding protein (MetQ).

Its subcellular location is the cell inner membrane. It catalyses the reaction L-methionine(out) + ATP + H2O = L-methionine(in) + ADP + phosphate + H(+). It carries out the reaction D-methionine(out) + ATP + H2O = D-methionine(in) + ADP + phosphate + H(+). Part of the ABC transporter complex MetNIQ involved in methionine import. Responsible for energy coupling to the transport system. The polypeptide is Methionine import ATP-binding protein MetN 2 (Salmonella typhi).